The primary structure comprises 308 residues: Tetraspanin-12 (308 aa).

Over 1 to 41 (MANRRQPVQHRAQQRVYRQSQIRYAPGAGGESEISCCVKYS) the chain is Cytoplasmic. A helical membrane pass occupies residues 42–62 (VFSFNVIFFLLGFGLLLFGVW). At 63–86 (AQIEKNTFVNMLSKASKLYLDPTW) the chain is on the extracellular side. Residues 87-107 (PLLIVGFLTFIIGFSGCVGSL) form a helical membrane-spanning segment. Residues 108-112 (RENTS) are Cytoplasmic-facing. The helical transmembrane segment at 113–133 (FLTFYSTLLGLLLIAEFSAGV) threads the bilayer. Residues 134-268 (FAYACRDQLD…PKLQLWLNNN (135 aa)) are Extracellular-facing. N213 carries N-linked (GlcNAc...) asparagine glycosylation. Residues 269–289 (MLLVAVSMVIIAIIQVLGICF) traverse the membrane as a helical segment. Topologically, residues 290 to 308 (AQNLKSDILAQRAKWYYTH) are cytoplasmic.

This sequence belongs to the tetraspanin (TM4SF) family. May interact with protease sup-17; the interaction promotes sup-17 cell membrane localization. As to expression, expressed in the germline.

The protein resides in the cell membrane. It localises to the cytoplasmic vesicle membrane. Its subcellular location is the endosome membrane. It is found in the early endosome membrane. The protein localises to the late endosome membrane. The protein resides in the recycling endosome membrane. It localises to the golgi apparatus. Its subcellular location is the trans-Golgi network membrane. Its function is as follows. Functions redundantly with tsp-14 isoform a to regulate body size, embryonic and vulva development. Functions redundantly with tsp-14 (isoforms a and b) to regulate cell fate specification in the postembryonic mesodermal M lineage and male development. May regulate BMP-like Sma/Mab signaling by mediating protease sup-17 trafficking to the cell surface. Together with tsp-14, functions redundantly to maintain cell surface levels of the BMP type II receptor daf-4 (but not BMP type I receptor sma-6), probably by regulating endosomal sorting of receptors and their targeting to degradative lysosomes. Together with tsp-14 involved in maintaining the structural and functional integrity of the endosomal network. Together with tsp-14, probably acts by modulating the activation of glp-1, a Notch-like receptor, to regulate germline maturation. Probably acts by modulating the activation of lin-12, a Notch-like receptor, to regulate cell fate specification such as the anchor cell/ventral uterine precursor cell decision. The protein is Tetraspanin-12 of Caenorhabditis elegans.